Reading from the N-terminus, the 96-residue chain is Bacterial microcompartment shell protein EutM (96 aa).

The region spanning 3-87 is the BMC domain; the sequence is ALGMIETRGL…PHGDLEEVFP (85 aa).

The protein belongs to the bacterial microcompartments protein family. As to quaternary structure, homohexamer with a central pore of up to 8.6 Angstroms diameter. The hexamers pack into a two-dimensional array. Interacts with EutQ; a probably cytoplasm-facing helix (Val-49 to Gln-64) interacts with N-terminus of EutQ.

It is found in the bacterial microcompartment. The protein operates within amine and polyamine degradation; ethanolamine degradation. Functionally, probably a major component of the bacterial microcompartment (BMC) shell dedicated to ethanolamine degradation. Each homohexamer has a central pore with an opening of up to 8.6 Angstroms. A positively-charged funnel leads to the pore from each side of the hexamer. The pore probably allows metabolite passage into and out of the BMC. Expression of eutK, eutL, eutM, eutN, eutS (eutSMNLK) in E.coli leads to formation of a single BMC. Expression alone leads to thick filaments that interfere with cell separation. Coexpression of eutQ with eutSMNLK permits E.coli to make cells with more than one mobile BMC, as is usual in vivo. May play a role in BMC shell biogenesis. Can replace homolog pduA in the pdu operon, cells grow better than wild-type on 1,2-propanediol and vitamin B12. Protein is incorporated into the pdu BMC microcompartment. Its function is as follows. The ethanolamine (EA) catabolic bacterial microcompartment (BMC) probably concentrates low levels of ethanolamine catabolic enzymes, concentrates volatile reaction intermediates, keeps the level of toxic acetaldehyde low, generates enough acetyl-CoA to support cell growth, and maintains a pool of free coenzyme A (CoA) and NAD. Deletion of BMC genes (eutK, eutL, eutM) restores growth of eutD deletions, suggesting there are dedicated pools of coenzyme A (CoA) and NAD in the BMC. Expression of the eut operon allows this bacteria to use ethanolamine as a carbon, nitrogen and energy source. It relies on cobalamin (vitamin B12) both as a cofactor for the ethanolamine ammonia-lyase (EAL) activity and to induce the operon. EA enhances bacterial survival in macrophages in a concentration-dependent manner, suggesting it is an important nutrient during infection. The protein is Bacterial microcompartment shell protein EutM of Salmonella typhimurium (strain LT2 / SGSC1412 / ATCC 700720).